We begin with the raw amino-acid sequence, 201 residues long: Recombination protein RecR (201 aa).

The segment at 60 to 75 adopts a C4-type zinc-finger fold; that stretch reads CKKCFNLTSEDECEIC. Residues 83-177 form the Toprim domain; that stretch reads KLICVVAETK…KVTRIAYGLP (95 aa).

Belongs to the RecR family.

May play a role in DNA repair. It seems to be involved in an RecBC-independent recombinational process of DNA repair. It may act with RecF and RecO. In Prochlorococcus marinus (strain MIT 9215), this protein is Recombination protein RecR.